The sequence spans 225 residues: Rho GDP-dissociation inhibitor 3 (225 aa).

The protein belongs to the Rho GDI family. In terms of tissue distribution, detected only in brain, lung, kidney and testis.

The protein localises to the cytoplasm. Inhibits GDP/GTP exchange reaction of RhoB. Interacts specifically with the GDP- and GTP-bound forms of post-translationally processed Rhob and Rhog proteins, both of which show a growth-regulated expression in mammalian cells. Stimulates the release of the GDP-bound but not the GTP-bound RhoB protein. Also inhibits the GDP/GTP exchange of RhoB but shows less ability to inhibit the dissociation of prebound GTP. The polypeptide is Rho GDP-dissociation inhibitor 3 (Arhgdig) (Mus musculus (Mouse)).